The sequence spans 224 residues: Small ribosomal subunit protein uS3 (224 aa).

The region spanning 39 to 107 is the KH type-2 domain; it reads IREFLKKKPS…DVWVEIAEVK (69 aa).

This sequence belongs to the universal ribosomal protein uS3 family. As to quaternary structure, part of the 30S ribosomal subunit. Forms a tight complex with proteins S10 and S14.

Its function is as follows. Binds the lower part of the 30S subunit head. Binds mRNA in the 70S ribosome, positioning it for translation. This is Small ribosomal subunit protein uS3 from Chlamydia muridarum (strain MoPn / Nigg).